We begin with the raw amino-acid sequence, 429 residues long: Adenylosuccinate synthetase (429 aa).

Residues 13 to 19 and 41 to 43 contribute to the GTP site; these read GDEGKGK and GHT. Residue aspartate 14 is the Proton acceptor of the active site. The Mg(2+) site is built by aspartate 14 and glycine 41. IMP-binding positions include 14–17, 39–42, threonine 130, arginine 144, glutamine 225, threonine 240, and arginine 304; these read DEGK and NAGH. Residue histidine 42 is the Proton donor of the active site. Position 300 to 306 (300 to 306) interacts with substrate; it reads ATTGRRR. GTP is bound by residues arginine 306, 332–334, and 417–419; these read KLD and STG.

Belongs to the adenylosuccinate synthetase family. Homodimer. The cofactor is Mg(2+).

It localises to the cytoplasm. It carries out the reaction IMP + L-aspartate + GTP = N(6)-(1,2-dicarboxyethyl)-AMP + GDP + phosphate + 2 H(+). Its pathway is purine metabolism; AMP biosynthesis via de novo pathway; AMP from IMP: step 1/2. Its function is as follows. Plays an important role in the de novo pathway of purine nucleotide biosynthesis. Catalyzes the first committed step in the biosynthesis of AMP from IMP. The polypeptide is Adenylosuccinate synthetase (Buchnera aphidicola subsp. Baizongia pistaciae (strain Bp)).